Reading from the N-terminus, the 513-residue chain is Putative ATP-dependent RNA helicase QP509L (513 aa).

The Helicase ATP-binding domain maps to K110 to P262. L123–T130 serves as a coordination point for ATP. The DEAH box motif lies at D215–H218.

The protein belongs to the DEAD box helicase family. DEAH subfamily.

It catalyses the reaction ATP + H2O = ADP + phosphate + H(+). This chain is Putative ATP-dependent RNA helicase QP509L, found in Ornithodoros (relapsing fever ticks).